We begin with the raw amino-acid sequence, 628 residues long: Phosphomethylpyrimidine synthase (628 aa).

Substrate-binding positions include N228, M257, Y286, H322, 342-344, 383-386, and E422; these read SRG and DGLR. H426 is a binding site for Zn(2+). A substrate-binding site is contributed by Y449. Zn(2+) is bound at residue H490. Residues C570, C573, and C578 each coordinate [4Fe-4S] cluster.

This sequence belongs to the ThiC family. In terms of assembly, homodimer. [4Fe-4S] cluster is required as a cofactor.

The catalysed reaction is 5-amino-1-(5-phospho-beta-D-ribosyl)imidazole + S-adenosyl-L-methionine = 4-amino-2-methyl-5-(phosphooxymethyl)pyrimidine + CO + 5'-deoxyadenosine + formate + L-methionine + 3 H(+). The protein operates within cofactor biosynthesis; thiamine diphosphate biosynthesis. In terms of biological role, catalyzes the synthesis of the hydroxymethylpyrimidine phosphate (HMP-P) moiety of thiamine from aminoimidazole ribotide (AIR) in a radical S-adenosyl-L-methionine (SAM)-dependent reaction. The sequence is that of Phosphomethylpyrimidine synthase from Methylibium petroleiphilum (strain ATCC BAA-1232 / LMG 22953 / PM1).